Here is a 294-residue protein sequence, read N- to C-terminus: UDP-3-O-acyl-N-acetylglucosamine deacetylase (294 aa).

The Zn(2+) site is built by H75, H232, and D236. The active-site Proton donor is the H259.

This sequence belongs to the LpxC family. It depends on Zn(2+) as a cofactor.

It catalyses the reaction a UDP-3-O-[(3R)-3-hydroxyacyl]-N-acetyl-alpha-D-glucosamine + H2O = a UDP-3-O-[(3R)-3-hydroxyacyl]-alpha-D-glucosamine + acetate. Its pathway is glycolipid biosynthesis; lipid IV(A) biosynthesis; lipid IV(A) from (3R)-3-hydroxytetradecanoyl-[acyl-carrier-protein] and UDP-N-acetyl-alpha-D-glucosamine: step 2/6. Functionally, catalyzes the hydrolysis of UDP-3-O-myristoyl-N-acetylglucosamine to form UDP-3-O-myristoylglucosamine and acetate, the committed step in lipid A biosynthesis. The protein is UDP-3-O-acyl-N-acetylglucosamine deacetylase of Sulfurimonas denitrificans (strain ATCC 33889 / DSM 1251) (Thiomicrospira denitrificans (strain ATCC 33889 / DSM 1251)).